Consider the following 424-residue polypeptide: Histidine--tRNA ligase (424 aa).

Belongs to the class-II aminoacyl-tRNA synthetase family. Homodimer.

It is found in the cytoplasm. It carries out the reaction tRNA(His) + L-histidine + ATP = L-histidyl-tRNA(His) + AMP + diphosphate + H(+). The chain is Histidine--tRNA ligase from Escherichia coli O17:K52:H18 (strain UMN026 / ExPEC).